Consider the following 113-residue polypeptide: DNA-binding protein PTO0204 (113 aa).

It belongs to the PDCD5 family.

The sequence is that of DNA-binding protein PTO0204 from Picrophilus torridus (strain ATCC 700027 / DSM 9790 / JCM 10055 / NBRC 100828 / KAW 2/3).